The following is an 881-amino-acid chain: Putative SWI/SNF-related matrix-associated actin-dependent regulator of chromatin subfamily A member 3-like 1 (881 aa).

Positions 272-486 constitute a Helicase ATP-binding domain; it reads DKRPDPLRGG…YSLMAFLRFE (215 aa). ATP is bound at residue 285–292; sequence DDMGLGKT. Residues 308 to 343 form a disordered region; it reads STSTPTEEPLDGEGDKIEKKGKKRGRGKSSESVTRK. Positions 437–440 match the DEAH box motif; sequence DEAH. The segment at 635–674 adopts an RING-type zinc-finger fold; the sequence is CPICISPPTNIIITRCAHIFCRACILQTLQRSKPLCPLCR. A disordered region spans residues 681-703; the sequence is DLYNAPPPPPDSSNTDGEDAKSS. The Helicase C-terminal domain maps to 711–876; it reads ALLSLLMASR…EREVNVEDVV (166 aa).

This sequence belongs to the SNF2/RAD54 helicase family. RAD16 subfamily.

The protein resides in the nucleus. Functionally, possesses intrinsic ATP-dependent nucleosome-remodeling activity. This activity may be required for transcriptional activation or repression of specific target promoters. This chain is Putative SWI/SNF-related matrix-associated actin-dependent regulator of chromatin subfamily A member 3-like 1, found in Arabidopsis thaliana (Mouse-ear cress).